The sequence spans 296 residues: Ribosomal RNA small subunit methyltransferase A (296 aa).

S-adenosyl-L-methionine-binding residues include N30, L32, G57, E78, D103, and N128.

The protein belongs to the class I-like SAM-binding methyltransferase superfamily. rRNA adenine N(6)-methyltransferase family. RsmA subfamily.

It localises to the cytoplasm. The catalysed reaction is adenosine(1518)/adenosine(1519) in 16S rRNA + 4 S-adenosyl-L-methionine = N(6)-dimethyladenosine(1518)/N(6)-dimethyladenosine(1519) in 16S rRNA + 4 S-adenosyl-L-homocysteine + 4 H(+). In terms of biological role, specifically dimethylates two adjacent adenosines (A1518 and A1519) in the loop of a conserved hairpin near the 3'-end of 16S rRNA in the 30S particle. May play a critical role in biogenesis of 30S subunits. This chain is Ribosomal RNA small subunit methyltransferase A, found in Staphylococcus haemolyticus (strain JCSC1435).